Here is a 36-residue protein sequence, read N- to C-terminus: Photosystem I reaction center subunit VIII (36 aa).

Residues 7–29 (PSILVPLVGILLPAVTMASLFLY) traverse the membrane as a helical segment.

It belongs to the PsaI family.

The protein resides in the plastid. Its subcellular location is the chloroplast thylakoid membrane. Its function is as follows. May help in the organization of the PsaL subunit. In Adiantum capillus-veneris (Maidenhair fern), this protein is Photosystem I reaction center subunit VIII.